The primary structure comprises 472 residues: MAKTYNAGVKEYRETYWMPEYEPKDSDFLACFKVVPQPGVPREEIAAAVAAESSTGTWTTVWTDLLTDLDYYKGRAYRIEDVPGDDSAFYAFIAYPIDLFEEGSIVSVMTSLVGNVFGFKALRSIRLEDIRFPLAYVMTCGGPPHGIQVERDKMDKYGRPMLGCTIKPKLGLSAKNYGRAVYECLRGGLDFTKDDENVTSQPFMRWRDRFLFCQDAIEKAQDETGERTGHYLNATAGTPEEMYERAEFAKEIGSPIVMHDFLTGGLTANTGLANYCRKNGLLLHIHRAMHGVIDRNPLHGIHFRVLSKVLRLSGGDHLHSGTVVGKLEGDRGSDLGWIDIMRDSFIAEDRSRGIMFDQDFGEMPGVIPVASGGIHVWHMPALVAIFGDDSVLQFGGGTIGHPWGNAVGAAVNLVALEACVQARNEGQEIEKNGKEILTNDGKHSPELKIAMETWKEIKFEFDTVDKLDLSHK.

Asparagine 115 and threonine 165 together coordinate substrate. Catalysis depends on lysine 167, which acts as the Proton acceptor. Position 169 (lysine 169) interacts with substrate. The Mg(2+) site is built by lysine 193, aspartate 195, and glutamate 196. An N6-carboxylysine modification is found at lysine 193. Histidine 286 (proton acceptor) is an active-site residue. Substrate contacts are provided by arginine 287, histidine 319, and serine 371.

Belongs to the RuBisCO large chain family. Type I subfamily. As to quaternary structure, heterohexadecamer of 8 large chains and 8 small chains. Mg(2+) serves as cofactor.

The catalysed reaction is 2 (2R)-3-phosphoglycerate + 2 H(+) = D-ribulose 1,5-bisphosphate + CO2 + H2O. The enzyme catalyses D-ribulose 1,5-bisphosphate + O2 = 2-phosphoglycolate + (2R)-3-phosphoglycerate + 2 H(+). RuBisCO catalyzes two reactions: the carboxylation of D-ribulose 1,5-bisphosphate, the primary event in carbon dioxide fixation, as well as the oxidative fragmentation of the pentose substrate. Both reactions occur simultaneously and in competition at the same active site. The sequence is that of Ribulose bisphosphate carboxylase large chain 1 from Hydrogenovibrio marinus.